A 222-amino-acid polypeptide reads, in one-letter code: Probable nicotinate-nucleotide adenylyltransferase (222 aa).

It belongs to the NadD family.

The catalysed reaction is nicotinate beta-D-ribonucleotide + ATP + H(+) = deamido-NAD(+) + diphosphate. It functions in the pathway cofactor biosynthesis; NAD(+) biosynthesis; deamido-NAD(+) from nicotinate D-ribonucleotide: step 1/1. Functionally, catalyzes the reversible adenylation of nicotinate mononucleotide (NaMN) to nicotinic acid adenine dinucleotide (NaAD). This Xylella fastidiosa (strain M12) protein is Probable nicotinate-nucleotide adenylyltransferase.